The following is a 167-amino-acid chain: Large ribosomal subunit protein uL10 (167 aa).

This sequence belongs to the universal ribosomal protein uL10 family. In terms of assembly, part of the ribosomal stalk of the 50S ribosomal subunit. The N-terminus interacts with L11 and the large rRNA to form the base of the stalk. The C-terminus forms an elongated spine to which L12 dimers bind in a sequential fashion forming a multimeric L10(L12)X complex.

Functionally, forms part of the ribosomal stalk, playing a central role in the interaction of the ribosome with GTP-bound translation factors. This is Large ribosomal subunit protein uL10 from Ligilactobacillus salivarius (strain UCC118) (Lactobacillus salivarius).